Consider the following 102-residue polypeptide: Small ribosomal subunit protein uS10 (102 aa).

It belongs to the universal ribosomal protein uS10 family. Part of the 30S ribosomal subunit.

Its function is as follows. Involved in the binding of tRNA to the ribosomes. This chain is Small ribosomal subunit protein uS10, found in Sulfolobus acidocaldarius (strain ATCC 33909 / DSM 639 / JCM 8929 / NBRC 15157 / NCIMB 11770).